The chain runs to 161 residues: Protein yippee-like B0546.4 (161 aa).

Residues 14–111 (SLYGCVVCNT…IENANFEKIA (98 aa)) enclose the Yippee domain. Cysteine 18, cysteine 21, cysteine 74, and cysteine 77 together coordinate Zn(2+). A disordered region spans residues 117-161 (PLGEDRQEAPPAPNLEMSRYPLEAEKKSRPQYRTVSVSSSSSAEC). Low complexity predominate over residues 151 to 161 (VSVSSSSSAEC).

Belongs to the yippee family.

This chain is Protein yippee-like B0546.4, found in Caenorhabditis elegans.